A 210-amino-acid chain; its full sequence is Scoloptoxin SSD558 (210 aa).

Residues Met1–Gly23 form the signal peptide.

Contains 3 disulfide bonds. In terms of tissue distribution, expressed by the venom gland.

It localises to the secreted. The sequence is that of Scoloptoxin SSD558 from Scolopendra dehaani (Thai centipede).